The chain runs to 480 residues: Probable tRNA N6-adenosine threonylcarbamoyltransferase, mitochondrial (480 aa).

The transit peptide at 1 to 86 directs the protein to the mitochondrion; that stretch reads MVRLFLTLSP…NPNFDDNLVV (86 aa). A divalent metal cation is bound by residues His-194 and His-198. Substrate contacts are provided by residues 217–221, Asp-250, Gly-265, Glu-269, 373–374, and Thr-401; these read LISGG and SN. Asp-402 is a binding site for a divalent metal cation.

Belongs to the KAE1 / TsaD family. In terms of assembly, homodimer. Requires a divalent metal cation as cofactor. As to expression, expressed in young developing leaves, roots, flowers and siliques.

The protein resides in the mitochondrion inner membrane. It carries out the reaction L-threonylcarbamoyladenylate + adenosine(37) in tRNA = N(6)-L-threonylcarbamoyladenosine(37) in tRNA + AMP + H(+). In terms of biological role, required for the formation of a threonylcarbamoyl group on adenosine at position 37 (t(6)A37) in mitochondrial tRNAs that read codons beginning with adenine. Probably involved in the transfer of the threonylcarbamoyl moiety of threonylcarbamoyl-AMP (TC-AMP) to the N6 group of A37. Involved in mitochondrial genome maintenance. May have a role in embryonic development in plants. This chain is Probable tRNA N6-adenosine threonylcarbamoyltransferase, mitochondrial, found in Arabidopsis thaliana (Mouse-ear cress).